The following is a 253-amino-acid chain: Indole-3-glycerol phosphate synthase (253 aa).

This sequence belongs to the TrpC family.

It catalyses the reaction 1-(2-carboxyphenylamino)-1-deoxy-D-ribulose 5-phosphate + H(+) = (1S,2R)-1-C-(indol-3-yl)glycerol 3-phosphate + CO2 + H2O. Its pathway is amino-acid biosynthesis; L-tryptophan biosynthesis; L-tryptophan from chorismate: step 4/5. This Bacillus cereus (strain G9842) protein is Indole-3-glycerol phosphate synthase.